A 1357-amino-acid chain; its full sequence is DNA-directed RNA polymerase subunit beta (1357 aa).

The protein belongs to the RNA polymerase beta chain family. As to quaternary structure, the RNAP catalytic core consists of 2 alpha, 1 beta, 1 beta' and 1 omega subunit. When a sigma factor is associated with the core the holoenzyme is formed, which can initiate transcription.

It catalyses the reaction RNA(n) + a ribonucleoside 5'-triphosphate = RNA(n+1) + diphosphate. Functionally, DNA-dependent RNA polymerase catalyzes the transcription of DNA into RNA using the four ribonucleoside triphosphates as substrates. The polypeptide is DNA-directed RNA polymerase subunit beta (Pseudomonas entomophila (strain L48)).